The sequence spans 522 residues: Protein nucleotidyltransferase YdiU (522 aa).

G109, G111, R112, K132, D144, G145, R195, and R202 together coordinate ATP. Catalysis depends on D271, which acts as the Proton acceptor. Mg(2+) contacts are provided by N272 and D281. D281 is an ATP binding site.

It belongs to the SELO family. Requires Mg(2+) as cofactor. Mn(2+) serves as cofactor.

The catalysed reaction is L-seryl-[protein] + ATP = 3-O-(5'-adenylyl)-L-seryl-[protein] + diphosphate. The enzyme catalyses L-threonyl-[protein] + ATP = 3-O-(5'-adenylyl)-L-threonyl-[protein] + diphosphate. It catalyses the reaction L-tyrosyl-[protein] + ATP = O-(5'-adenylyl)-L-tyrosyl-[protein] + diphosphate. It carries out the reaction L-histidyl-[protein] + UTP = N(tele)-(5'-uridylyl)-L-histidyl-[protein] + diphosphate. The catalysed reaction is L-seryl-[protein] + UTP = O-(5'-uridylyl)-L-seryl-[protein] + diphosphate. The enzyme catalyses L-tyrosyl-[protein] + UTP = O-(5'-uridylyl)-L-tyrosyl-[protein] + diphosphate. In terms of biological role, nucleotidyltransferase involved in the post-translational modification of proteins. It can catalyze the addition of adenosine monophosphate (AMP) or uridine monophosphate (UMP) to a protein, resulting in modifications known as AMPylation and UMPylation. This is Protein nucleotidyltransferase YdiU from Burkholderia orbicola (strain MC0-3).